A 93-amino-acid polypeptide reads, in one-letter code: Co-chaperonin GroES (93 aa).

This sequence belongs to the GroES chaperonin family. As to quaternary structure, heptamer of 7 subunits arranged in a ring. Interacts with the chaperonin GroEL.

The protein resides in the cytoplasm. Functionally, together with the chaperonin GroEL, plays an essential role in assisting protein folding. The GroEL-GroES system forms a nano-cage that allows encapsulation of the non-native substrate proteins and provides a physical environment optimized to promote and accelerate protein folding. GroES binds to the apical surface of the GroEL ring, thereby capping the opening of the GroEL channel. The chain is Co-chaperonin GroES from Streptococcus anginosus.